Reading from the N-terminus, the 1098-residue chain is Probable arabinosyltransferase B (1098 aa).

12 consecutive transmembrane segments (helical) span residues 28-50 (WVAT…LPVV), 217-239 (LKLL…LWRL), 271-293 (ASWR…WHVI), 402-419 (LRPE…YVLI), 434-456 (AVVT…AALV), 472-494 (LVGT…TVVF), 541-558 (FGFL…FIML), 570-587 (PAWR…FLMF), 597-619 (GLFA…PSVL), 626-648 (MAFL…GWWY), 663-685 (IDGI…YAAW), and 698-720 (LIRA…VFVA).

It belongs to the emb family.

Its subcellular location is the cell membrane. Functionally, arabinosyl transferase responsible for the polymerization of arabinose into the arabinan of arabinogalactan. This Mycobacterium bovis (strain ATCC BAA-935 / AF2122/97) protein is Probable arabinosyltransferase B (embB).